A 426-amino-acid polypeptide reads, in one-letter code: Tol-Pal system protein TolB (426 aa).

The N-terminal stretch at 1–24 (MKLKSRFTSIIGVITLFFSQTVTA) is a signal peptide.

It belongs to the TolB family. In terms of assembly, the Tol-Pal system is composed of five core proteins: the inner membrane proteins TolA, TolQ and TolR, the periplasmic protein TolB and the outer membrane protein Pal. They form a network linking the inner and outer membranes and the peptidoglycan layer.

Its subcellular location is the periplasm. Part of the Tol-Pal system, which plays a role in outer membrane invagination during cell division and is important for maintaining outer membrane integrity. The sequence is that of Tol-Pal system protein TolB from Actinobacillus pleuropneumoniae serotype 3 (strain JL03).